The primary structure comprises 185 residues: Elongation factor P (185 aa).

The protein belongs to the elongation factor P family.

The protein resides in the cytoplasm. The protein operates within protein biosynthesis; polypeptide chain elongation. Its function is as follows. Involved in peptide bond synthesis. Stimulates efficient translation and peptide-bond synthesis on native or reconstituted 70S ribosomes in vitro. Probably functions indirectly by altering the affinity of the ribosome for aminoacyl-tRNA, thus increasing their reactivity as acceptors for peptidyl transferase. The chain is Elongation factor P from Burkholderia cenocepacia (strain HI2424).